A 135-amino-acid chain; its full sequence is Centromere protein S (135 aa).

The tract at residues 103–135 is disordered; it reads SLEQKEKKKKKSVSGGNVSRNSDMDTVVPESKD.

The protein belongs to the TAF9 family. CENP-S/MHF1 subfamily. As to quaternary structure, heterodimer with CENPX, sometimes called MHF; this interaction stabilizes both partners. MHF heterodimers can assemble to form tetrameric structures. MHF also coassemble with CENPT-CENPW heterodimers at centromeres to form the tetrameric CENP-T-W-S-X complex. Forms a discrete complex with FANCM and CENPX, called FANCM-MHF; this interaction, probably mediated by direct binding between CENPS and FANCM, leads to synergistic activation of double-stranded DNA binding and strongly stimulates FANCM-mediated DNA remodeling. Recruited by FANCM to the Fanconi anemia (FA) core complex, which consists of CENPS, CENPX, FANCA, FANCB, FANCC, FANCE, FANCF, FANCG, FANCL, FANCM, FAAP24 and FAAP100. The FA core complex associates with Bloom syndrome (BLM) complex, which consists of at least BLM, DNA topoisomerase 3-alpha (TOP3A), RMI1/BLAP75, RPA1/RPA70 and RPA2/RPA32. The super complex between FA and BLM is called BRAFT. Component of the CENPA-CAD complex, composed of CENPI, CENPK, CENPL, CENPO, CENPP, CENPQ, CENPR and CENPS. The CENPA-CAD complex is probably recruited on centromeres by the CENPA-NAC complex, at least composed of CENPA, CENPC, CENPH, CENPM, CENPN, CENPT and CENPU.

It is found in the nucleus. The protein localises to the chromosome. It localises to the centromere. The protein resides in the kinetochore. DNA-binding component of the Fanconi anemia (FA) core complex. Required for the normal activation of the FA pathway, leading to monoubiquitination of the FANCI-FANCD2 complex in response to DNA damage, cellular resistance to DNA cross-linking drugs, and prevention of chromosomal breakage. In complex with CENPX (MHF heterodimer), crucial cofactor for FANCM in both binding and ATP-dependent remodeling of DNA. Stabilizes FANCM. In complex with CENPX and FANCM (but not other FANC proteins), rapidly recruited to blocked forks and promotes gene conversion at blocked replication forks. In complex with CENPT, CENPW and CENPX (CENP-T-W-S-X heterotetramer), involved in the formation of a functional kinetochore outer plate, which is essential for kinetochore-microtubule attachment and faithful mitotic progression. As a component of MHF and CENP-T-W-S-X complexes, binds DNA and bends it to form a nucleosome-like structure. DNA-binding function is fulfilled in the presence of CENPX, with the following preference for DNA substates: Holliday junction &gt; double-stranded &gt; splay arm &gt; single-stranded. Does not bind DNA on its own. This chain is Centromere protein S (cenps), found in Xenopus laevis (African clawed frog).